Here is a 455-residue protein sequence, read N- to C-terminus: Retinoic acid receptor beta (455 aa).

Residues 1–87 (MTTSSRTCPV…PLPPPRVYKP (87 aa)) form a modulating region. The interval 45-78 (QSHPPTSGCSTPSPASVETQSTSSEELVPSPPSP) is disordered. A compositionally biased stretch (polar residues) spans 47–66 (HPPTSGCSTPSPASVETQST). 2 NR C4-type zinc fingers span residues 88 to 108 (CFVC…CEGC) and 124 to 148 (CHRD…LQKC). Positions 88 to 153 (CFVCQDKSSG…RLQKCFEVGM (66 aa)) form a DNA-binding region, nuclear receptor. Residues 154–182 (SKESVRNDRNKKKKEPTKQESTENYEMTA) form a hinge region. The region spanning 183-417 (ELDDLTEKIR…PLIQEMLENS (235 aa)) is the NR LBD domain. Positions 416-455 (NSEGHEPLTPTSNGNTAEHSPSISPSSVDNSSVSQSPMVQ) are disordered. Residues 424-434 (TPTSNGNTAEH) are compositionally biased toward polar residues. Residues 435–455 (SPSISPSSVDNSSVSQSPMVQ) are compositionally biased toward low complexity.

Belongs to the nuclear hormone receptor family. NR1 subfamily. As to quaternary structure, heterodimer; with a RXR molecule. Binds DNA preferentially as a RAR/RXR heterodimer. Both isoforms expressed in heart, lung, kidney, liver, brain, lung and testis. Isoform Beta-1 is highly expressed in testes and brain. Levels increase during testes maturation. Isoform beta-2 is predominant in heart, kidney and lung.

Its subcellular location is the nucleus. Receptor for retinoic acid. Retinoic acid receptors bind as heterodimers to their target response elements in response to their ligands, all-trans or 9-cis retinoic acid, and regulate gene expression in various biological processes. The RAR/RXR heterodimers bind to the retinoic acid response elements (RARE) composed of tandem 5'-AGGTCA-3' sites known as DR1-DR5. May be required for Sertoli cell differentiation and spermatogenesis. This Coturnix japonica (Japanese quail) protein is Retinoic acid receptor beta (RARB).